We begin with the raw amino-acid sequence, 298 residues long: Ribosomal RNA small subunit methyltransferase H (298 aa).

S-adenosyl-L-methionine-binding positions include 35–37 (GGH), Asp-55, Phe-82, Asp-100, and Gln-107.

The protein belongs to the methyltransferase superfamily. RsmH family.

It localises to the cytoplasm. The enzyme catalyses cytidine(1402) in 16S rRNA + S-adenosyl-L-methionine = N(4)-methylcytidine(1402) in 16S rRNA + S-adenosyl-L-homocysteine + H(+). In terms of biological role, specifically methylates the N4 position of cytidine in position 1402 (C1402) of 16S rRNA. The protein is Ribosomal RNA small subunit methyltransferase H of Chlamydia abortus (strain DSM 27085 / S26/3) (Chlamydophila abortus).